Reading from the N-terminus, the 192-residue chain is Large ribosomal subunit protein uL5 (192 aa).

Belongs to the universal ribosomal protein uL5 family. Part of the 50S ribosomal subunit; part of the 5S rRNA/L5/L18/L25 subcomplex. Contacts the 5S rRNA and the P site tRNA. Forms a bridge to the 30S subunit in the 70S ribosome.

This is one of the proteins that bind and probably mediate the attachment of the 5S RNA into the large ribosomal subunit, where it forms part of the central protuberance. In the 70S ribosome it contacts protein S13 of the 30S subunit (bridge B1b), connecting the 2 subunits; this bridge is implicated in subunit movement. Contacts the P site tRNA; the 5S rRNA and some of its associated proteins might help stabilize positioning of ribosome-bound tRNAs. This chain is Large ribosomal subunit protein uL5, found in Paenarthrobacter aurescens (strain TC1).